A 335-amino-acid chain; its full sequence is DNA-directed RNA polymerases I and III subunit RPAC1 (335 aa).

Serine 2 is modified (N-acetylserine). Serine 17 carries the post-translational modification Phosphoserine.

This sequence belongs to the archaeal Rpo3/eukaryotic RPB3 RNA polymerase subunit family. Component of the RNA polymerase I (Pol I) complex consisting of 14 subunits: RPA135, RPA190, RPC40, RPA14, RPB5, RPO26, RPA43, RPB8, RPA12, RPB10, RPC19, RPC10, RPA49 and RPA34. The complex is composed of a horseshoe-shaped core containing ten subunits (RPA135, RPA190, RPB5, RPO26, RPB8, RPB10, RPC10, RPA12, RPC19 and RPC40) where RPA135 and RPA190 form the DNA-binding cleft. Outside of the core, RPA14 and RPA43 form the stalk that mediates interactions with transcription initiation factors and newly synthesized RNA. Component of the RNA polymerase III (Pol III) complex consisting of at least 17 subunits. Interacts with the RPC19/RPAC2 and RPC53/RPC4. Interacts with retrotransposons Ty integrase, targeting Ty1, Ty2 and Ty4 integration upstream of pol III-transcribed genes.

The protein localises to the nucleus. Its subcellular location is the nucleolus. DNA-dependent RNA polymerases catalyze the transcription of DNA into RNA using the four ribonucleoside triphosphates as substrates. Common component of RNA polymerases I (Pol I) and III (Pol III) which synthesize ribosomal RNA precursors and small RNAs, such as 5S rRNA and tRNAs, respectively. RPC40 is part of the polymerase core and may function as a clamp element that moves to open and close the cleft. Plays an important role in targeting retrotransposons Ty integration upstream of pol III-transcribed genes such as tRNA genes, allowing Ty1, Ty2 and Ty4 to proliferate and yet minimizing genetic damage. In Saccharomyces cerevisiae (strain ATCC 204508 / S288c) (Baker's yeast), this protein is DNA-directed RNA polymerases I and III subunit RPAC1.